A 108-amino-acid polypeptide reads, in one-letter code: Precursor of CEP16 (108 aa).

Residues 1-27 (MVMAKNLTKFYVVFLVVLMMVVSLLLA) form the signal peptide. Residues 28-92 (IEGRPVKDSS…VGHHRAKGYK (65 aa)) constitute a propeptide that is removed on maturation. Asn-50 and Asn-98 each carry an N-linked (GlcNAc...) asparagine glycan. The segment at 76-108 (QSGPSPGVGHHRAKGYKMFGRANDSGPSPGVGH) is disordered. Hydroxyproline occurs at positions 102 and 104.

It belongs to the C-terminally encoded plant signaling peptide (CEP) family. Interacts with CEP receptors (e.g. CEPR1 and CEPR2). The mature small signaling peptide is generated by proteolytic processing of the longer precursor.

Its subcellular location is the secreted. It is found in the extracellular space. The protein resides in the apoplast. Functionally, extracellular signaling peptide that may regulate primary root growth rate and systemic nitrogen (N)-demand signaling. The sequence is that of Precursor of CEP16 from Arabidopsis thaliana (Mouse-ear cress).